The chain runs to 116 residues: Ribosome-binding factor A (116 aa).

This sequence belongs to the RbfA family. In terms of assembly, monomer. Binds 30S ribosomal subunits, but not 50S ribosomal subunits or 70S ribosomes.

Its subcellular location is the cytoplasm. One of several proteins that assist in the late maturation steps of the functional core of the 30S ribosomal subunit. Associates with free 30S ribosomal subunits (but not with 30S subunits that are part of 70S ribosomes or polysomes). Required for efficient processing of 16S rRNA. May interact with the 5'-terminal helix region of 16S rRNA. The polypeptide is Ribosome-binding factor A (Clostridium perfringens (strain 13 / Type A)).